The sequence spans 402 residues: B3 domain-containing protein LFL1 (402 aa).

A disordered region spans residues 1–174 (MRGEERWQEQ…AAPRPSSHHT (174 aa)). Residues 74–87 (ARPPTLAASAAAAS) show a composition bias toward low complexity. Residues 88–102 (SPPPPPPPPIPPLPP) show a composition bias toward pro residues. 2 stretches are compositionally biased toward low complexity: residues 103–139 (STSTSAARPTDMAGVTSKRRSSSASTSSSSGDGAAVS) and 156–169 (PRPAASLRPAAPRP). The segment at residues 181–284 (LQKELRYSDV…RFVIGAKKAG (104 aa)) is a DNA-binding region (TF-B3). Residues 381 to 402 (LHVTDDKSGHSLIPNPKSGPHM) are disordered.

In terms of tissue distribution, expressed in anthers, pollen grains and young developing embryos.

Its subcellular location is the nucleus. Its function is as follows. Transcription repressor involved in flowering time regulation. Represses the flowering activator EHD1 by binding specifically to the DNA sequence 5'-CATGCATG-3 of its promoter. The chain is B3 domain-containing protein LFL1 (LFL1) from Oryza sativa subsp. japonica (Rice).